The following is a 139-amino-acid chain: Aspartate 1-decarboxylase (139 aa).

Serine 26 (schiff-base intermediate with substrate; via pyruvic acid) is an active-site residue. Serine 26 carries the pyruvic acid (Ser) modification. Threonine 58 contributes to the substrate binding site. The active-site Proton donor is tyrosine 59. Substrate is bound at residue glycine 72–alanine 74.

The protein belongs to the PanD family. As to quaternary structure, heterooctamer of four alpha and four beta subunits. Pyruvate serves as cofactor. Post-translationally, is synthesized initially as an inactive proenzyme, which is activated by self-cleavage at a specific serine bond to produce a beta-subunit with a hydroxyl group at its C-terminus and an alpha-subunit with a pyruvoyl group at its N-terminus.

It is found in the cytoplasm. The enzyme catalyses L-aspartate + H(+) = beta-alanine + CO2. It participates in cofactor biosynthesis; (R)-pantothenate biosynthesis; beta-alanine from L-aspartate: step 1/1. In terms of biological role, catalyzes the pyruvoyl-dependent decarboxylation of aspartate to produce beta-alanine. In Microcystis aeruginosa (strain NIES-843 / IAM M-2473), this protein is Aspartate 1-decarboxylase.